The chain runs to 459 residues: Spermidine/putrescine import ATP-binding protein PotA (459 aa).

The region spanning 15–334 (IELIDIVKQF…PRNIWVAKFI (320 aa)) is the ABC transporter domain. 47–54 (GPSGSGKT) serves as a coordination point for ATP. The segment at 115–203 (RVPKENVKKE…EEFKNKYFKR (89 aa)) is insert.

It belongs to the ABC transporter superfamily. Spermidine/putrescine importer (TC 3.A.1.11.1) family. The complex is composed of two ATP-binding proteins (PotA), two transmembrane proteins (PotB and PotC) and a solute-binding protein (PotD).

It is found in the cell membrane. The enzyme catalyses ATP + H2O + polyamine-[polyamine-binding protein]Side 1 = ADP + phosphate + polyamineSide 2 + [polyamine-binding protein]Side 1.. Functionally, part of the ABC transporter complex PotABCD involved in spermidine/putrescine import. Responsible for energy coupling to the transport system. This chain is Spermidine/putrescine import ATP-binding protein PotA, found in Mycoplasmopsis synoviae (strain 53) (Mycoplasma synoviae).